A 603-amino-acid chain; its full sequence is Matrix metalloproteinase-17 (603 aa).

The N-terminal stretch at 1–35 (MRRRAARGPGPPPPGPGLSRLPLPLLLLLALGTRG) is a signal peptide. Positions 36 to 125 (GCAAPAPAPR…PVLTQARRRR (90 aa)) are excised as a propeptide. A Cysteine switch motif is present at residues 108 to 115 (PRCSLPDL). C110 is a Zn(2+) binding site. A glycan (N-linked (GlcNAc...) asparagine) is linked at N137. H248 lines the Zn(2+) pocket. The active site involves E249. Zn(2+)-binding residues include H252 and H258. Residues 301 to 329 (SPTAQPEEPPLLPEPPDNRSSAPPRKDVP) form a disordered region. N318 carries an N-linked (GlcNAc...) asparagine glycan. A disulfide bond links C332 and C523. Hemopexin repeat units follow at residues 333–378 (STHF…WRGL), 382–427 (LDSV…FSLP), 428–475 (PGGI…WRGV), and 476–523 (PSTL…WLVC). The disordered stretch occupies residues 537–571 (DAAEGPRAPPGQHDQSRSEDGYEVCSCTSGASSPP). Residue S565 is the site of GPI-anchor amidated serine attachment. Positions 566-603 (GASSPPGAPGPLVAATMLLLLPPLSPGALWTAAQALTL) are cleaved as a propeptide — removed in mature form.

Belongs to the peptidase M10A family. Zn(2+) serves as cofactor. It depends on Ca(2+) as a cofactor. Post-translationally, the precursor is cleaved by a furin endopeptidase. Expressed in brain, leukocytes, colon, ovary testis and breast cancer. Expressed also in many transformed and non-transformed cell types.

The protein localises to the cell membrane. It is found in the secreted. The protein resides in the extracellular space. Its subcellular location is the extracellular matrix. Endopeptidase that degrades various components of the extracellular matrix, such as fibrin. May be involved in the activation of membrane-bound precursors of growth factors or inflammatory mediators, such as tumor necrosis factor-alpha. May also be involved in tumoral process. Cleaves pro-TNF-alpha at the '74-Ala-|-Gln-75' site. Not obvious if able to proteolytically activate progelatinase A. Does not hydrolyze collagen types I, II, III, IV and V, gelatin, fibronectin, laminin, decorin nor alpha1-antitrypsin. The sequence is that of Matrix metalloproteinase-17 (MMP17) from Homo sapiens (Human).